The chain runs to 320 residues: 33 kDa chaperonin (320 aa).

The span at 1–17 shows a compositional bias: basic and acidic residues; sequence MTDASGSERLKRTKDIS. The segment at 1–27 is disordered; it reads MTDASGSERLKRTKDISESTPPSSLPD. 2 disulfides stabilise this stretch: Cys262-Cys264 and Cys295-Cys298.

Belongs to the HSP33 family. Under oxidizing conditions two disulfide bonds are formed involving the reactive cysteines. Under reducing conditions zinc is bound to the reactive cysteines and the protein is inactive.

Its subcellular location is the cytoplasm. Its function is as follows. Redox regulated molecular chaperone. Protects both thermally unfolding and oxidatively damaged proteins from irreversible aggregation. Plays an important role in the bacterial defense system toward oxidative stress. This Synechococcus sp. (strain JA-3-3Ab) (Cyanobacteria bacterium Yellowstone A-Prime) protein is 33 kDa chaperonin.